We begin with the raw amino-acid sequence, 360 residues long: Phospho-N-acetylmuramoyl-pentapeptide-transferase (360 aa).

The next 10 membrane-spanning stretches (helical) occupy residues 21-41 (YLSF…LWMG), 73-93 (TMGG…WADL), 94-114 (SNPY…VGFV), 132-152 (WKYF…YAHG), 168-188 (VMPQ…VGTS), 199-219 (GLAI…AWAT), 239-259 (LVVV…FNTY), 263-283 (VFMG…IAVL), 288-308 (LVLV…ILQV), and 338-358 (VIVR…ATLK).

The protein belongs to the glycosyltransferase 4 family. MraY subfamily. It depends on Mg(2+) as a cofactor.

The protein localises to the cell inner membrane. The enzyme catalyses UDP-N-acetyl-alpha-D-muramoyl-L-alanyl-gamma-D-glutamyl-meso-2,6-diaminopimeloyl-D-alanyl-D-alanine + di-trans,octa-cis-undecaprenyl phosphate = di-trans,octa-cis-undecaprenyl diphospho-N-acetyl-alpha-D-muramoyl-L-alanyl-D-glutamyl-meso-2,6-diaminopimeloyl-D-alanyl-D-alanine + UMP. It participates in cell wall biogenesis; peptidoglycan biosynthesis. Catalyzes the initial step of the lipid cycle reactions in the biosynthesis of the cell wall peptidoglycan: transfers peptidoglycan precursor phospho-MurNAc-pentapeptide from UDP-MurNAc-pentapeptide onto the lipid carrier undecaprenyl phosphate, yielding undecaprenyl-pyrophosphoryl-MurNAc-pentapeptide, known as lipid I. In Vibrio atlanticus (strain LGP32) (Vibrio splendidus (strain Mel32)), this protein is Phospho-N-acetylmuramoyl-pentapeptide-transferase.